We begin with the raw amino-acid sequence, 590 residues long: MSSSPPLDGSDHPAHSSGQSPEAGNPTSLARSVSASVCPVKPDNPDSTEPEAVTALEASDGFQINSKQTDRLPLQGHSPCAAAAAPSSAMPLRHSSEAAGVADSLEASAERRTQGLRFHLHTRQEVNLSITTTRMHEPQMFAGEEGWHPENQNPSQVNDLQQHQEPENARHEAGPRDAPSDTGDLELPGERQQKHEVADREATMRGGRLQQDAGLPDPGKGALPSGHCGRPDSETLMEVDAAEQSLVAVLSSSVGNGSASGLTLGNPLMEVELPTCSPSSEILNGSIPIQDLQPPEGSVEMPGTDRAYGGRASSSSVCGSSQPPAESAEESCSSITTALKELHELLVISSKPASEAAYEEVTCQSEGTAWGQTRVNPSERWTESERRTQDEDRPQVSHAIPECVKTEKLTDASPDTRIEDGENATFQGPGGGLSTDHGAPRSRGSVHESRSVTVTSAETSNQSHRTLGVEISPRLLTGEGDALSQTCEQTKSLLVKDLGQGTQNPAPDRPATREDVCRDAARPSLEVEAPPSHSSGPCILPPLGFPAADIDRILRAGFTLQEALGALHRVGGNADLALLVLLAKNIVVPT.

4 disordered regions span residues 1–116 (MSSS…TQGL), 144–234 (EEGW…PDSE), 277–331 (SPSS…AEES), and 359–466 (EEVT…SHRT). The span at 16–35 (SSGQSPEAGNPTSLARSVSA) shows a compositional bias: polar residues. The span at 78–91 (SPCAAAAAPSSAMP) shows a compositional bias: low complexity. The span at 150 to 161 (ENQNPSQVNDLQ) shows a compositional bias: polar residues. Composition is skewed to basic and acidic residues over residues 162-179 (QHQE…RDAP) and 188-203 (PGER…REAT). Residues 313-331 (SSSSVCGSSQPPAESAEES) show a composition bias toward low complexity. Polar residues predominate over residues 362–376 (TCQSEGTAWGQTRVN). Basic and acidic residues-rich tracts occupy residues 380–395 (RWTE…DRPQ) and 404–420 (VKTE…RIED). Residues 451–465 (SVTVTSAETSNQSHR) are compositionally biased toward polar residues. The UBA domain occupies 544-584 (GFPAADIDRILRAGFTLQEALGALHRVGGNADLALLVLLAK).

Interacts with YRDC. Highly expressed in renal outer medulla, renal inner medulla, duodenum, ileum and jejunum. Moderately expressed in renal outer cortex, renal papilla, brain and liver.

It localises to the cell membrane. The protein localises to the nucleus. Its subcellular location is the golgi apparatus. The protein resides in the trans-Golgi network. Mediates transcriptional and post-transcriptional regulation of SLC5A1. Inhibits a dynamin and PKC-dependent exocytotic pathway of SLC5A1. Also involved in transcriptional regulation of SLC22A2. Exhibits glucose-dependent, short-term inhibition of SLC5A1 and SLC22A2 by inhibiting the release of vesicles from the trans-Golgi network. The polypeptide is Regulatory solute carrier protein family 1 member 1 (RSC1A1) (Oryctolagus cuniculus (Rabbit)).